The chain runs to 347 residues: Transcription termination/antitermination protein NusA (347 aa).

The S1 motif domain occupies 112–184; that stretch reads GEIVAGVIQR…REPLITLSRT (73 aa). In terms of domain architecture, KH spans 287–347; sequence ARAARVVVPD…GVSRGMAHDR (61 aa). Positions 322–347 are disordered; it reads DIRGDAPPPPPGQPEPGVSRGMAHDR.

Belongs to the NusA family. Monomer. Binds directly to the core enzyme of the DNA-dependent RNA polymerase and to nascent RNA.

It localises to the cytoplasm. Participates in both transcription termination and antitermination. This is Transcription termination/antitermination protein NusA from Mycobacterium bovis (strain ATCC BAA-935 / AF2122/97).